A 486-amino-acid chain; its full sequence is Putative protease Do-like 13 (486 aa).

The tract at residues 44–229 (KINTFSSKPN…IPAPVVKHFI (186 aa)) is serine protease. Residues histidine 83, aspartate 114, and serine 192 each act as charge relay system in the active site. Residues 241 to 334 (FCSLNLSYQH…TILLKILREG (94 aa)) enclose the PDZ domain.

Belongs to the peptidase S1C family.

Putative serine protease. This chain is Putative protease Do-like 13 (DEGP13), found in Arabidopsis thaliana (Mouse-ear cress).